A 64-amino-acid chain; its full sequence is Lectin-A (64 aa).

2 Chitin-binding type-1 domains span residues 1 to 20 (APEC…QVVT) and 22 to 45 (DFDD…NTDA).

Post-translationally, glycosylated.

N-acetyl-D-glucosamine binding lectin. Shows low hemagglutinating activity towards human erythrocytes. Has low mitogenic activity towards human peripheral blood lymphocytes. The sequence is that of Lectin-A from Phytolacca americana (American pokeweed).